The primary structure comprises 97 residues: Small ribosomal subunit protein bS20 (97 aa).

Belongs to the bacterial ribosomal protein bS20 family.

In terms of biological role, binds directly to 16S ribosomal RNA. This is Small ribosomal subunit protein bS20 from Prochlorococcus marinus (strain MIT 9215).